A 282-amino-acid polypeptide reads, in one-letter code: Para-Rep C1 (282 aa).

The CRESS-DNA virus Rep endonuclease domain occupies 1 to 99 (MASKRWCFTL…ETLISEIGAP (99 aa)). The RCR-1 motif lies at 7–10 (CFTL). A divalent metal cation contacts are provided by glutamate 38 and histidine 47. An RCR-2 motif is present at residues 47 to 49 (HLQ). The short motif at 56–77 (KMIRLGGLKKKFGYRAHWEIAK) is the Nuclear localization signal element. The active-site For DNA cleavage activity is tyrosine 86. Positions 86–89 (YCTK) match the RCR-3 motif. Serine 94 lines the a divalent metal cation pocket. 174–182 (GSDGGEGKS) provides a ligand contact to ATP.

Belongs to the nanoviridea/circoviridae replication-associated protein family. Homooligomer (Potential). Rep binds to repeated DNA motifs (iterons). The cofactor is Mg(2+). It depends on Mn(2+) as a cofactor.

The protein resides in the host nucleus. The catalysed reaction is ATP + H2O = ADP + phosphate + H(+). Its function is as follows. Initiates and terminates the replication only of its own subviral DNA molecule. The closed circular ssDNA genome is first converted to a superhelical dsDNA. Rep binds a specific hairpin at the genome origin of replication. Introduces an endonucleolytic nick within the intergenic region of the genome, thereby initiating the rolling circle replication (RCR). Following cleavage, binds covalently to the 5'-phosphate of DNA as a tyrosyl ester. The cleavage gives rise to a free 3'-OH that serves as a primer for the cellular DNA polymerase. The polymerase synthesizes the (+) strand DNA by rolling circle mechanism. After one round of replication, a Rep-catalyzed nucleotidyl transfer reaction releases a circular single-stranded virus genome, thereby terminating the replication. Displays origin-specific DNA cleavage, nucleotidyl transferase, ATPase and helicase activities. This chain is Para-Rep C1 (C1), found in Faba bean necrotic yellows C11 alphasatellite (FBNYC11A).